A 3948-amino-acid polypeptide reads, in one-letter code: Equisetin synthetase eqxS (3948 aa).

The region spanning 4–438 (SEPIAVIGSA…GTNAHAIIEA (435 aa)) is the Ketosynthase family 3 (KS3) domain. Residues Cys177, His316, and His358 each act as for beta-ketoacyl synthase activity in the active site. The tract at residues 543 to 847 (IFTGQGTQWP…DTIEAISEGR (305 aa)) is malonyl-CoA:ACP transacylase (MAT) domain. Residues 931-1066 (HPLLGRRCHD…AQIKASLGAP (136 aa)) form an N-terminal hotdog fold region. The interval 931–1233 (HPLLGRRCHD…MELVPFSPAT (303 aa)) is dehydratase (DH) domain. In terms of domain architecture, PKS/mFAS DH spans 931–1235 (HPLLGRRCHD…LVPFSPATPA (305 aa)). The active-site Proton acceptor; for dehydratase activity is the His964. The C-terminal hotdog fold stretch occupies residues 1081-1235 (LRPVSVDRFY…LVPFSPATPA (155 aa)). Catalysis depends on Asp1141, which acts as the Proton donor; for dehydratase activity. The interval 1376-1574 (MLQDVYEQGF…GIDTTTPPVH (199 aa)) is methyltransferase (MT) domain. The interval 2105-2277 (TFLLVGLTGE…VAASSIDISS (173 aa)) is ketoreductase (KR) domain. The region spanning 2389-2464 (AIIKESFIVR…DLVDECLDLL (76 aa)) is the Carrier 1 domain. Ser2424 carries the O-(pantetheine 4'-phosphoryl)serine modification. The tract at residues 2480–2553 (QAAKPTTVIP…NSTDILAPPR (74 aa)) is disordered. 2 stretches are compositionally biased toward polar residues: residues 2487 to 2505 (VIPQTPTRVTPPESSQGTS) and 2513 to 2528 (GSDSSHSPIGTPLTSW). Positions 2529-2541 (DRQDSSPPDKSDD) are enriched in basic and acidic residues. The segment at 2564–2991 (SYGQAGFWFL…IRGSDKTVDA (428 aa)) is condensation (C) domain. The interval 3026-3424 (QVIQDNPDNI…DGLLFCDGRL (399 aa)) is adenylation (A) (KR) domain. A Carrier 2 domain is found at 3540-3617 (EILTPSEQRL…AMAGVLEDCG (78 aa)). O-(pantetheine 4'-phosphoryl)serine is present on Ser3577. The reductase (RED) domain stretch occupies residues 3653-3870 (LTGSSGYLGR…MPVNEVVEAI (218 aa)).

This sequence in the C-terminal section; belongs to the NRP synthetase family.

The catalysed reaction is L-serine + 7 malonyl-CoA + acetyl-CoA + 2 S-adenosyl-L-methionine + ATP + 8 NADPH + 11 H(+) = (5S)-3-[(2E,6R,8E,10E,12E)-2,6-dimethyltetradeca-2,8,10,12-tetraenoyl]-5-(hydroxymethyl)pyrrolidine-2,4-dione + AMP + 2 S-adenosyl-L-homocysteine + 7 CO2 + diphosphate + 8 NADP(+) + 8 CoA + 6 H2O. Its pathway is mycotoxin biosynthesis. In terms of biological role, hybrid PKS-NRPS synthetase; part of the gene cluster that mediates the biosynthesis of equisetin, a trans-fused decalin-containing tetramic acid with antimicrobial activity. The PKS module of eqxS together with the enoylreductase eqxC catalyze the formation of the polyketide unit which is then conjugated to L-serine by the condensation domain of the eqxS NRPS module. Activity of the Dieckmann cyclase domain (RED) results in release of the Dieckmann product intermediate. Diels-Alderase eqx3 is involved in endo-selective Diels-Alder cycloaddition to form the decalin ring, leading to the production of N-desmethylequisetin also called trichosetin. Subsequent N-methylation is carried out by eqxD to give equisetin. The polypeptide is Equisetin synthetase eqxS (Fusarium heterosporum).